The following is a 153-amino-acid chain: Transmembrane inner ear expressed protein (153 aa).

Positions 1–28 are cleaved as a signal peptide; the sequence is MAGRQHGSGRLWALGGAALGACLAGVAT. Residues 29-58 are Extracellular-facing; sequence QLVEPSTAPPKPKPPPLTKETVVFWDMRLW. Residues 59–79 form a helical membrane-spanning segment; sequence HVVGIFSLFVLSIIITLCCVF. The Cytoplasmic segment spans residues 80 to 153; it reads NCRVPRTRKE…KNEAKKKGEK (74 aa).

In terms of assembly, forms the MET channel composed of TMC (TMC1 or TMC2), TMIE, TOMT, CIB (CIB2 or CIB3), LHPL5 and PCDH15. As to expression, expressed in brain, kidney, liver, lung and cochlea.

Its subcellular location is the membrane. In terms of biological role, auxiliary subunit of the mechanotransducer (MET) non-specific cation channel complex located at the tips of stereocilia of cochlear hair cells and that mediates sensory transduction in the auditory system. The MET complex is composed of two dimeric pore-forming ion-conducting transmembrane TMC (TMC1 or TMC2) subunits, and aided by several auxiliary proteins including LHFPL5, TMIE, CIB2/3 and TOMT, and the tip-link PCDH15. May contribute to the formation of the pore. This is Transmembrane inner ear expressed protein (Tmie) from Mus musculus (Mouse).